Here is a 452-residue protein sequence, read N- to C-terminus: Ribulose bisphosphate carboxylase large chain (452 aa).

A propeptide spanning residues 1–2 (MS) is cleaved from the precursor. P3 is subject to N-acetylproline. K14 carries the N6,N6,N6-trimethyllysine modification. Substrate-binding residues include N123 and T173. K175 functions as the Proton acceptor in the catalytic mechanism. Substrate is bound at residue K177. Positions 201, 203, and 204 each coordinate Mg(2+). At K201 the chain carries N6-carboxylysine. The Proton acceptor role is filled by H294. The substrate site is built by R295, X327, and S379.

This sequence belongs to the RuBisCO large chain family. Type I subfamily. In terms of assembly, heterohexadecamer of 8 large chains and 8 small chains; disulfide-linked. The disulfide link is formed within the large subunit homodimers. Requires Mg(2+) as cofactor. Post-translationally, the disulfide bond which can form in the large chain dimeric partners within the hexadecamer appears to be associated with oxidative stress and protein turnover.

It localises to the plastid. It is found in the chloroplast. It catalyses the reaction 2 (2R)-3-phosphoglycerate + 2 H(+) = D-ribulose 1,5-bisphosphate + CO2 + H2O. The catalysed reaction is D-ribulose 1,5-bisphosphate + O2 = 2-phosphoglycolate + (2R)-3-phosphoglycerate + 2 H(+). RuBisCO catalyzes two reactions: the carboxylation of D-ribulose 1,5-bisphosphate, the primary event in carbon dioxide fixation, as well as the oxidative fragmentation of the pentose substrate in the photorespiration process. Both reactions occur simultaneously and in competition at the same active site. In Salvadora persica (Toothbrush tree), this protein is Ribulose bisphosphate carboxylase large chain.